Here is a 434-residue protein sequence, read N- to C-terminus: RNA-binding protein SRO9 (434 aa).

Residues 1–13 (MSAETAAANTATA) show a composition bias toward low complexity. Positions 1-243 (MSAETAAANT…FHHNQQHPQQ (243 aa)) are disordered. Residues 26-41 (SKQVNLTPAPLPTSSP) show a composition bias toward polar residues. The residue at position 55 (S55) is a Phosphoserine. Low complexity predominate over residues 93 to 124 (KRSGSKNGASNGNSNKSKNNKTAASSTSSSNA). Positions 125–140 (NRKKKHHQHNAKKQQQ) are enriched in basic residues. The residue at position 148 (S148) is a Phosphoserine. Residue K156 forms a Glycyl lysine isopeptide (Lys-Gly) (interchain with G-Cter in ubiquitin) linkage. Positions 158–167 (ATSQENGQST) are enriched in polar residues. Residues 173–195 (PHHRNHHHSHHHNSNGPQRRKFH) are compositionally biased toward basic residues. Over residues 196-208 (NSNNAGMPQNQGF) the composition is skewed to polar residues. A compositionally biased stretch (low complexity) spans 218–227 (RNARNNNNNR). A compositionally biased stretch (basic residues) spans 228–238 (SKYHNHFHHNQ). Residues 255-351 (VQPVLMAINN…KEGDNVTGEA (97 aa)) form the HTH La-type RNA-binding domain. Glycyl lysine isopeptide (Lys-Gly) (interchain with G-Cter in ubiquitin) cross-links involve residues K301, K342, and K352. The tract at residues 396–434 (SLPPVPQQEEESSTELASQEQETKEDSAPVAAGESESSL) is disordered. Phosphoserine is present on S422.

In terms of assembly, interacts with HAP1. Component of the HMC including HAP1, SRO9 and YDJ1.

It is found in the cytoplasm. Its function is as follows. May overlap in function with tropomyosin and may be involved in organization of actin filaments. Acts as a multicopy suppressor of RHO3 mutation. RNA-binding protein which may modulate mRNA translation. Involved in heme regulation of HAP1, as a component of the high-molecular-weight complex (HMC). The polypeptide is RNA-binding protein SRO9 (SRO9) (Saccharomyces cerevisiae (strain ATCC 204508 / S288c) (Baker's yeast)).